A 51-amino-acid polypeptide reads, in one-letter code: MILLMCLTSYRKNRRAYKKEFEAMLKCEEGDLSCPFIIKTQNLGFFVDISS.

This is an uncharacterized protein from Rickettsia conorii (strain ATCC VR-613 / Malish 7).